The following is a 662-amino-acid chain: MDPKERIKELREKINYHNYRYYVLDQPEISDYEYDMLMRELIELEEKYPELKTPDSPSQRVGGEPLKEFEPFTHVVPMLSLANAFSEGELRDFDRRVREAVGDVEYVVELKIDGLSVELIYEKGIFTVGSTRGDGIVGENVTQNLKTIKSIPLRLKDDVSLVVRGEVFMPRASFEKLNEEREKLGESLFANPRNAAAGSLRQLDPKVTAKRDLDIFIFNLQKIEGRKFKTHIETLEFLNEQGFKIIPIHKKCSNIDEVIKEIEEIRNLRDKLPYDIDGAVVKVNDLEKREILGQTAKDPRWAIAFKYPAERKKTKVLDIIVQVGRTGALTPTAILEPVAISGSVVSRATLHNEDYIKEKDIRIGDTVIVQKAGEIIPEVVEVVKEERTGQEREFVMPDRCPECGALAVRLLGEAIRRCTGLNCPAQLLRGIIHFASKDAMDIEGLGPAIINQLLSKGLIHNIADLYYLKYEDLIQLERMGDKSVKNLLNAIEESKTRDLDRLLFGLGINLIGSKAAQVIAEHFKTMDNIMKAKFEDFTQLPDIGPKMARSIVSFFAEKQNVEIIEKLKNAGVNMKKLSKGKVSNIFEGKTFVLTGALESYTREEATRMIEERGGKVTNSVSKKTDYVLVGKDPGSKLKKAQELGIKIIDEKQFEEMLKGENI.

NAD(+) contacts are provided by residues 31-35 (DYEYD), 80-81 (SL), and E109. The active-site N6-AMP-lysine intermediate is the K111. The NAD(+) site is built by R132, E166, K282, and K306. 4 residues coordinate Zn(2+): C400, C403, C418, and C423. The BRCT domain occupies 581–662 (KVSNIFEGKT…FEEMLKGENI (82 aa)).

It belongs to the NAD-dependent DNA ligase family. LigA subfamily. Requires Mg(2+) as cofactor. The cofactor is Mn(2+).

It carries out the reaction NAD(+) + (deoxyribonucleotide)n-3'-hydroxyl + 5'-phospho-(deoxyribonucleotide)m = (deoxyribonucleotide)n+m + AMP + beta-nicotinamide D-nucleotide.. In terms of biological role, DNA ligase that catalyzes the formation of phosphodiester linkages between 5'-phosphoryl and 3'-hydroxyl groups in double-stranded DNA using NAD as a coenzyme and as the energy source for the reaction. It is essential for DNA replication and repair of damaged DNA. This chain is DNA ligase, found in Thermoanaerobacter sp. (strain X514).